The following is a 61-amino-acid chain: Small ribosomal subunit protein uS14B (61 aa).

Zn(2+) contacts are provided by C24, C27, C40, and C43.

Belongs to the universal ribosomal protein uS14 family. Zinc-binding uS14 subfamily. Part of the 30S ribosomal subunit. Contacts proteins S3 and S10. It depends on Zn(2+) as a cofactor.

In terms of biological role, binds 16S rRNA, required for the assembly of 30S particles and may also be responsible for determining the conformation of the 16S rRNA at the A site. The sequence is that of Small ribosomal subunit protein uS14B from Shouchella clausii (strain KSM-K16) (Alkalihalobacillus clausii).